Consider the following 308-residue polypeptide: uncharacterized protein (308 aa).

Composition is skewed to polar residues over residues 138–148 (WSFTKHGSNTP) and 205–229 (STSH…QPPS). Disordered stretches follow at residues 138 to 157 (WSFT…PLCN) and 205 to 235 (STSH…TDAS).

Its subcellular location is the cytoplasm. This is an uncharacterized protein from Schizosaccharomyces pombe (strain 972 / ATCC 24843) (Fission yeast).